The primary structure comprises 386 residues: MSEPTSSSSLDITSNCIIETPLQPSDFLPKSANLFPKFPERISVDSWELWEFDTFDTNGSVAFGCSLYRDARGVEQGGFHAEVNALWPDGTHWGETLYFAVSEVVENSDGTTGGKWLSKDGGSITFHIASDYTAAALDFNVPGKVSGTMELRNHANVSPTSNLPASDAEAQLCPGVYYTFPMGPVATSVTATFSSVGANGESRELFISSGYGGMVRGWSARPWPTFMNDAYYVVAQVGPYMLQILRTLGSVFVQHKPFAVARLYLDGSLVSAANTVVGDELTAHADDVKGDAVRLTKVQPDEKSQGLSGKFRDGNVGYVLEFAKKDSEHGWTFQISHKRAVWSEPTSAPGPDGTGKSGWIEAISGGAKGENYEGHGFGGQLQIPVP.

Residues 1–223 are beta-sandwich motif; the sequence is MSEPTSSSSL…MVRGWSARPW (223 aa). Substrate contacts are provided by Glu-51, Asn-84, and Lys-356. Positions 223 to 386 are beta-barrel motif; that stretch reads WPTFMNDAYY…FGGQLQIPVP (164 aa).

This sequence belongs to the Diels-Alderase family.

Its pathway is secondary metabolite biosynthesis. 3-aminomethyl-p-menthane which is similar to the phomasetin substructure, dose-dependently inhibits phm7 activity in vitro and production of phomasetin in the fungus. Its function is as follows. Diels-Alderase; part of the gene cluster that mediates the biosynthesis of the trans-fused decalin-containing tetramic acid phomasetin, the stereochemical opposite of the HIV-1 integrase inhibitor equisetin. The PKS module of phm1 together with the enoylreductase phm4 catalyze the formation of the polyketide unit which is then conjugated to L-serine by the condensation domain of the phm1 NRPS module. Activity of the Dieckmann cyclase domain (RED) of phm1 results in release of the Dieckmann product intermediate. The Diels-Alderase phm7 then uses the Dieckmann product of phm1 as substrate and catalyzes the Diels-Alder cycloaddition to form the decalin ring of N-desmethylphomasetin. N-desmethylphomasetin is further methylated to phomasetin by the methyltransferase phm5. This Pyrenochaetopsis sp protein is Diels-Alderase phm7.